A 236-amino-acid polypeptide reads, in one-letter code: 7-cyano-7-deazaguanine synthase (236 aa).

An ATP-binding site is contributed by 13-23 (FSGGQDSTVCL). Zn(2+) contacts are provided by Cys-200, Cys-215, Cys-218, and Cys-221.

The protein belongs to the QueC family. Zn(2+) serves as cofactor.

The enzyme catalyses 7-carboxy-7-deazaguanine + NH4(+) + ATP = 7-cyano-7-deazaguanine + ADP + phosphate + H2O + H(+). It functions in the pathway purine metabolism; 7-cyano-7-deazaguanine biosynthesis. In terms of biological role, catalyzes the ATP-dependent conversion of 7-carboxy-7-deazaguanine (CDG) to 7-cyano-7-deazaguanine (preQ(0)). The sequence is that of 7-cyano-7-deazaguanine synthase from Parvibaculum lavamentivorans (strain DS-1 / DSM 13023 / NCIMB 13966).